A 549-amino-acid polypeptide reads, in one-letter code: Phosphoenolpyruvate carboxykinase (ATP) (549 aa).

Position 250-257 (250-257) interacts with ATP; the sequence is GLSGTGKT.

The protein belongs to the phosphoenolpyruvate carboxykinase (ATP) family. As to quaternary structure, homotetramer.

It carries out the reaction oxaloacetate + ATP = phosphoenolpyruvate + ADP + CO2. The protein operates within carbohydrate biosynthesis; gluconeogenesis. This Saccharomyces cerevisiae (strain ATCC 204508 / S288c) (Baker's yeast) protein is Phosphoenolpyruvate carboxykinase (ATP) (PCK1).